A 336-amino-acid chain; its full sequence is MKAAVVTKDHHVDVTYKTLRSLKHGEALLKMECCGVCHTDLHVKNGDFGDKTGVILGHEGIGVVAEVGPGVTSLKPGDRASVAWFYEGCGHCEYCNSGNETLCRSVKNAGYSVDGGMAEECIVVADYAVKVPDGLDSAAASSITCAGVTTYKAVKLSKIRPGQWIAIYGLGGLGNLALQYAKNVFNAKVIAIDVNDEQLKLATEMGADLAINSHTEDAAKIVQEKTGGAHAAVVTAVAKAAFNSAVDAVRAGGRVVAVGLPPESMSLDIPRLVLDGIEVVGSLVGTRQDLTEAFQFAAEGKVVPKVALRPLADINTIFTEMEEGKIRGRMVIDFRH.

Positions 37, 58, 89, 92, 95, 103, and 145 each coordinate Zn(2+).

The protein belongs to the zinc-containing alcohol dehydrogenase family. Zn(2+) is required as a cofactor.

The enzyme catalyses a primary alcohol + NAD(+) = an aldehyde + NADH + H(+). The catalysed reaction is a secondary alcohol + NAD(+) = a ketone + NADH + H(+). In terms of biological role, preferred specificity is towards 1-propanol. The polypeptide is Alcohol dehydrogenase, propanol-preferring (adhP) (Escherichia coli (strain K12)).